We begin with the raw amino-acid sequence, 363 residues long: Adenosine 3'-phospho 5'-phosphosulfate transporter 2 (363 aa).

10 helical membrane passes run 39-59, 63-83, 106-126, 131-151, 157-177, 187-206, 231-251, 257-277, 281-301, and 310-330; these read WLQFVLLSGAIFILYLGYGYM, IFKLPGMKPFGWTLTLIQFVI, IYGVIAFFTVATMGLSNASVG, PTQVIFKCCKLIPVLIGGILI, GWIDISAAILMSLGIIMFTLA, SRGYIMISGALLADAVIGNI, VFIFTYVVLSGEIFSAIPFFL, TFGYALIFSFLGYLGVNVVLT, VFGALVAVTVTTLRKALTIIL, and FTIEYVYAGSVVMLAIYLNLY.

Belongs to the nucleotide-sugar transporter family. SLC35B subfamily.

It localises to the golgi apparatus membrane. Functionally, mediates the transport of adenosine 3'-phospho 5'-phosphosulfate (PAPS), from cytosol into Golgi. PAPS is a universal sulfuryl donor for sulfation events that take place in the Golgi. The sequence is that of Adenosine 3'-phospho 5'-phosphosulfate transporter 2 (pst-2) from Caenorhabditis briggsae.